We begin with the raw amino-acid sequence, 423 residues long: Glucose-1-phosphate adenylyltransferase (423 aa).

Alpha-D-glucose 1-phosphate is bound by residues Y107, G172, E187 to K188, and S205.

This sequence belongs to the bacterial/plant glucose-1-phosphate adenylyltransferase family. In terms of assembly, homotetramer.

It carries out the reaction alpha-D-glucose 1-phosphate + ATP + H(+) = ADP-alpha-D-glucose + diphosphate. Its pathway is glycan biosynthesis; glycogen biosynthesis. In terms of biological role, involved in the biosynthesis of ADP-glucose, a building block required for the elongation reactions to produce glycogen. Catalyzes the reaction between ATP and alpha-D-glucose 1-phosphate (G1P) to produce pyrophosphate and ADP-Glc. The sequence is that of Glucose-1-phosphate adenylyltransferase from Cereibacter sphaeroides (strain ATCC 17029 / ATH 2.4.9) (Rhodobacter sphaeroides).